Consider the following 143-residue polypeptide: Mediator of RNA polymerase II transcription subunit 21 (143 aa).

Positions 53–130 (KEFEKNIDEL…KVRTLTQDFT (78 aa)) form a coiled coil.

The protein belongs to the Mediator complex subunit 21 family. As to quaternary structure, component of the Mediator complex.

It is found in the nucleus. Component of the Mediator complex, a coactivator involved in the regulated transcription of nearly all RNA polymerase II-dependent genes. Mediator functions as a bridge to convey information from gene-specific regulatory proteins to the basal RNA polymerase II transcription machinery. Mediator is recruited to promoters by direct interactions with regulatory proteins and serves as a scaffold for the assembly of a functional preinitiation complex with RNA polymerase II and the general transcription factors. The protein is Mediator of RNA polymerase II transcription subunit 21 (SRB7) of Kluyveromyces lactis (strain ATCC 8585 / CBS 2359 / DSM 70799 / NBRC 1267 / NRRL Y-1140 / WM37) (Yeast).